The chain runs to 360 residues: NAD(P)H-quinone oxidoreductase subunit 1, chloroplastic (360 aa).

Helical transmembrane passes span 27 to 47, 98 to 118, 129 to 149, 165 to 185, 203 to 223, 248 to 268, 269 to 289, 297 to 317, and 340 to 360; these read IWIF…VLVI, FSIG…VIPF, IGIF…LMSG, AAQS…ISLL, FWGW…ISSL, YSGI…LISS, LFVT…ISIL, IFGT…FLFI, and FLLP…LFSL.

It belongs to the complex I subunit 1 family. As to quaternary structure, NDH is composed of at least 16 different subunits, 5 of which are encoded in the nucleus.

The protein resides in the plastid. It is found in the chloroplast thylakoid membrane. The enzyme catalyses a plastoquinone + NADH + (n+1) H(+)(in) = a plastoquinol + NAD(+) + n H(+)(out). The catalysed reaction is a plastoquinone + NADPH + (n+1) H(+)(in) = a plastoquinol + NADP(+) + n H(+)(out). In terms of biological role, NDH shuttles electrons from NAD(P)H:plastoquinone, via FMN and iron-sulfur (Fe-S) centers, to quinones in the photosynthetic chain and possibly in a chloroplast respiratory chain. The immediate electron acceptor for the enzyme in this species is believed to be plastoquinone. Couples the redox reaction to proton translocation, and thus conserves the redox energy in a proton gradient. This chain is NAD(P)H-quinone oxidoreductase subunit 1, chloroplastic, found in Lepidium virginicum (Virginia pepperweed).